A 72-amino-acid chain; its full sequence is Large ribosomal subunit protein uL29 (72 aa).

Belongs to the universal ribosomal protein uL29 family.

The polypeptide is Large ribosomal subunit protein uL29 (Chlamydia felis (strain Fe/C-56) (Chlamydophila felis)).